The chain runs to 75 residues: MAAKPFFRRRKVCPFSGENAPKIDYKDTRLLQRYISERGKIVPSRITAVSAKKQRELARAIKRARFLALLPYAVK.

The protein belongs to the bacterial ribosomal protein bS18 family. In terms of assembly, part of the 30S ribosomal subunit. Forms a tight heterodimer with protein bS6.

Its function is as follows. Binds as a heterodimer with protein bS6 to the central domain of the 16S rRNA, where it helps stabilize the platform of the 30S subunit. The polypeptide is Small ribosomal subunit protein bS18 (Ruegeria sp. (strain TM1040) (Silicibacter sp.)).